The chain runs to 355 residues: UDP-N-acetylglucosamine--N-acetylmuramyl-(pentapeptide) pyrophosphoryl-undecaprenol N-acetylglucosamine transferase (355 aa).

UDP-N-acetyl-alpha-D-glucosamine is bound by residues Thr-15–Gly-17, Asn-127, Arg-163, Ser-191, Ile-244, Ala-263–Glu-268, and Gln-288.

The protein belongs to the glycosyltransferase 28 family. MurG subfamily.

It is found in the cell inner membrane. It catalyses the reaction di-trans,octa-cis-undecaprenyl diphospho-N-acetyl-alpha-D-muramoyl-L-alanyl-D-glutamyl-meso-2,6-diaminopimeloyl-D-alanyl-D-alanine + UDP-N-acetyl-alpha-D-glucosamine = di-trans,octa-cis-undecaprenyl diphospho-[N-acetyl-alpha-D-glucosaminyl-(1-&gt;4)]-N-acetyl-alpha-D-muramoyl-L-alanyl-D-glutamyl-meso-2,6-diaminopimeloyl-D-alanyl-D-alanine + UDP + H(+). Its pathway is cell wall biogenesis; peptidoglycan biosynthesis. Functionally, cell wall formation. Catalyzes the transfer of a GlcNAc subunit on undecaprenyl-pyrophosphoryl-MurNAc-pentapeptide (lipid intermediate I) to form undecaprenyl-pyrophosphoryl-MurNAc-(pentapeptide)GlcNAc (lipid intermediate II). The sequence is that of UDP-N-acetylglucosamine--N-acetylmuramyl-(pentapeptide) pyrophosphoryl-undecaprenol N-acetylglucosamine transferase from Escherichia coli O157:H7.